The primary structure comprises 62 residues: MTILFQLALAALVILSFVMVIGVPVAYASPQDWDRSKQLIFLGSGLWIALVLVVGVLNFFVV.

Methionine 1 is modified (N-formylmethionine). The Lumenal segment spans residues 1 to 4 (MTIL). Residues 5–25 (FQLALAALVILSFVMVIGVPV) traverse the membrane as a helical segment. Residues 26–36 (AYASPQDWDRS) lie on the Cytoplasmic side of the membrane. The chain crosses the membrane as a helical span at residues 37–58 (KQLIFLGSGLWIALVLVVGVLN). The Lumenal portion of the chain corresponds to 59-62 (FFVV).

Belongs to the PsbZ family. As to quaternary structure, PSII is composed of 1 copy each of membrane proteins PsbA, PsbB, PsbC, PsbD, PsbE, PsbF, PsbH, PsbI, PsbJ, PsbK, PsbL, PsbM, PsbT, PsbX, PsbY, PsbZ, Psb30/Ycf12, peripheral proteins PsbO, CyanoQ (PsbQ), PsbU, PsbV and a large number of cofactors. It forms dimeric complexes. Part of a photosystem II (PSII) assembly intermediate complex PSII-I; crystallized from a strain deleted of psbJ, it forms monomeric PSII before addition of the oxygen evolving complex. PSII-I includes 3 assembly factors not found in mature PSII (Psb27, Psb28 and Psb34). Requires PSII binds multiple chlorophylls, carotenoids and specific lipids. as cofactor.

It localises to the cellular thylakoid membrane. In terms of biological role, may control the interaction of photosystem II (PSII) cores with the light-harvesting antenna, regulates electron flow through the 2 photosystem reaction centers. PSII is a light-driven water plastoquinone oxidoreductase, using light energy to abstract electrons from H(2)O, generating a proton gradient subsequently used for ATP formation. May also aid in binding of PsbK, Psb30/Ycf12 and the oxygen-evolving complex to PSII, at least in vitro. The protein is Photosystem II reaction center protein Z of Thermosynechococcus vestitus (strain NIES-2133 / IAM M-273 / BP-1).